The following is a 198-amino-acid chain: Beta-crystallin A1-1 (198 aa).

The segment at 1-13 is N-terminal arm; the sequence is MAQINPLPVPLGP. Beta/gamma crystallin 'Greek key' domains lie at 14–53 and 54–100; these read WKITVYDQENFQGKRMEFTSSCTNIMECGFDNIRSLKVEC and GAWI…RPIC. A connecting peptide region spans residues 101-106; it reads SANHKE. 2 Beta/gamma crystallin 'Greek key' domains span residues 107-148 and 149-197; these read SKLV…KVQC and GAWV…RRIQ.

It belongs to the beta/gamma-crystallin family. Homo/heterodimer, or complexes of higher-order. The structure of beta-crystallin oligomers seems to be stabilized through interactions between the N-terminal arms. In terms of processing, the N-terminus is blocked.

Its function is as follows. Crystallins are the dominant structural components of the vertebrate eye lens. The sequence is that of Beta-crystallin A1-1 from Aquarana catesbeiana (American bullfrog).